Here is a 278-residue protein sequence, read N- to C-terminus: Thiazole synthase (278 aa).

The active-site Schiff-base intermediate with DXP is Lys-109. 1-deoxy-D-xylulose 5-phosphate-binding positions include Gly-170, 197–198 (AG), and 219–220 (NT).

Belongs to the ThiG family. Homotetramer. Forms heterodimers with either ThiH or ThiS.

Its subcellular location is the cytoplasm. It carries out the reaction [ThiS sulfur-carrier protein]-C-terminal-Gly-aminoethanethioate + 2-iminoacetate + 1-deoxy-D-xylulose 5-phosphate = [ThiS sulfur-carrier protein]-C-terminal Gly-Gly + 2-[(2R,5Z)-2-carboxy-4-methylthiazol-5(2H)-ylidene]ethyl phosphate + 2 H2O + H(+). It functions in the pathway cofactor biosynthesis; thiamine diphosphate biosynthesis. Its function is as follows. Catalyzes the rearrangement of 1-deoxy-D-xylulose 5-phosphate (DXP) to produce the thiazole phosphate moiety of thiamine. Sulfur is provided by the thiocarboxylate moiety of the carrier protein ThiS. In vitro, sulfur can be provided by H(2)S. This chain is Thiazole synthase, found in Cupriavidus pinatubonensis (strain JMP 134 / LMG 1197) (Cupriavidus necator (strain JMP 134)).